A 203-amino-acid chain; its full sequence is Ribosome hibernation promotion factor (203 aa).

This sequence belongs to the HPF/YfiA ribosome-associated protein family. Long HPF subfamily. As to quaternary structure, interacts with 100S ribosomes.

It is found in the cytoplasm. Required for dimerization of active 70S ribosomes into 100S ribosomes in stationary phase; 100S ribosomes are translationally inactive and sometimes present during exponential growth. The sequence is that of Ribosome hibernation promotion factor from Bradyrhizobium diazoefficiens (strain JCM 10833 / BCRC 13528 / IAM 13628 / NBRC 14792 / USDA 110).